The primary structure comprises 688 residues: UvrABC system protein C (688 aa).

The GIY-YIG domain occupies 11–90 (LTPGVYLYKD…IKKHRPRYNI (80 aa)). In terms of domain architecture, UVR spans 200 to 235 (GELVDALRTEMEAASQGLDFERAAVLRDRIRALERT).

The protein belongs to the UvrC family. As to quaternary structure, interacts with UvrB in an incision complex.

It is found in the cytoplasm. Its function is as follows. The UvrABC repair system catalyzes the recognition and processing of DNA lesions. UvrC both incises the 5' and 3' sides of the lesion. The N-terminal half is responsible for the 3' incision and the C-terminal half is responsible for the 5' incision. This Nitratidesulfovibrio vulgaris (strain ATCC 29579 / DSM 644 / CCUG 34227 / NCIMB 8303 / VKM B-1760 / Hildenborough) (Desulfovibrio vulgaris) protein is UvrABC system protein C.